The chain runs to 244 residues: Putative nucleosome assembly protein C36B7.08c (244 aa).

The tract at residues 199 to 244 (EAMTEEASDEDESVDLEEDEEEEDEEDEEGDEEKQEPPSKKSKKSN) is disordered. Positions 201-232 (MTEEASDEDESVDLEEDEEEEDEEDEEGDEEK) are enriched in acidic residues. Serine 211 bears the Phosphoserine mark.

Belongs to the nucleosome assembly protein (NAP) family.

Its subcellular location is the nucleus. This chain is Putative nucleosome assembly protein C36B7.08c, found in Schizosaccharomyces pombe (strain 972 / ATCC 24843) (Fission yeast).